The primary structure comprises 336 residues: Glyceraldehyde-3-phosphate dehydrogenase (336 aa).

Residues Arg-12–Ile-13, Asp-34, Arg-78, and Ser-120 contribute to the NAD(+) site. Residues Ser-151–Thr-153 and Thr-182 contribute to the D-glyceraldehyde 3-phosphate site. Cys-152 functions as the Nucleophile in the catalytic mechanism. Asn-183 is a binding site for NAD(+). D-glyceraldehyde 3-phosphate-binding positions include Asn-211–Gly-212 and Arg-234. Asn-316 is a binding site for NAD(+).

It belongs to the glyceraldehyde-3-phosphate dehydrogenase family. Homotetramer.

It localises to the cytoplasm. It carries out the reaction D-glyceraldehyde 3-phosphate + phosphate + NAD(+) = (2R)-3-phospho-glyceroyl phosphate + NADH + H(+). It participates in carbohydrate degradation; glycolysis; pyruvate from D-glyceraldehyde 3-phosphate: step 1/5. In terms of biological role, catalyzes the oxidative phosphorylation of glyceraldehyde 3-phosphate (G3P) to 1,3-bisphosphoglycerate (BPG) using the cofactor NAD. The first reaction step involves the formation of a hemiacetal intermediate between G3P and a cysteine residue, and this hemiacetal intermediate is then oxidized to a thioester, with concomitant reduction of NAD to NADH. The reduced NADH is then exchanged with the second NAD, and the thioester is attacked by a nucleophilic inorganic phosphate to produce BPG. The polypeptide is Glyceraldehyde-3-phosphate dehydrogenase (gap) (Heyndrickxia coagulans (Weizmannia coagulans)).